The following is a 906-amino-acid chain: Translation initiation factor IF-2 (906 aa).

Disordered stretches follow at residues 94-125 (APEK…PETA), 165-232 (ESEA…TGKK), and 270-321 (RQEQ…SSEV). 3 stretches are compositionally biased toward basic and acidic residues: residues 165–176 (ESEAEKGTEIEK), 222–232 (GPAEARETGKK), and 270–284 (RQEQ…KREA). Positions 299 to 313 (QQRRSLKRGGKRKKY) are enriched in basic residues. Residues 405–574 (ERPPVITIMG…LLQAEMMELK (170 aa)) enclose the tr-type G domain. Residues 414 to 421 (GHVDHGKT) form a G1 region. GTP is bound at residue 414–421 (GHVDHGKT). The tract at residues 439–443 (GITQH) is G2. The interval 460 to 463 (DTPG) is G3. GTP-binding positions include 460-464 (DTPGH) and 514-517 (NKMD). A G4 region spans residues 514 to 517 (NKMD). A G5 region spans residues 550-552 (SAH).

This sequence belongs to the TRAFAC class translation factor GTPase superfamily. Classic translation factor GTPase family. IF-2 subfamily.

The protein resides in the cytoplasm. Functionally, one of the essential components for the initiation of protein synthesis. Protects formylmethionyl-tRNA from spontaneous hydrolysis and promotes its binding to the 30S ribosomal subunits. Also involved in the hydrolysis of GTP during the formation of the 70S ribosomal complex. The polypeptide is Translation initiation factor IF-2 (Sulfurovum sp. (strain NBC37-1)).